Consider the following 178-residue polypeptide: E1B protein, small T-antigen (178 aa).

This sequence belongs to the adenoviridae E1B 19 kDa protein family.

The protein resides in the host cell membrane. It localises to the host nucleus envelope. It is found in the host nucleus lamina. Functionally, putative adenovirus Bcl-2 homolog that inhibits apoptosis induced by TNF or FAS pathways, as well as p53-mediated apoptosis. Without E1B 19K function, virus production is compromised because of premature death of host cell. Interacts with Bax protein in cell lysates. This is E1B protein, small T-antigen from Human adenovirus B serotype 7 (HAdV-7).